The following is a 226-amino-acid chain: Leucyl/phenylalanyl-tRNA--protein transferase (226 aa).

This sequence belongs to the L/F-transferase family.

The protein resides in the cytoplasm. It carries out the reaction N-terminal L-lysyl-[protein] + L-leucyl-tRNA(Leu) = N-terminal L-leucyl-L-lysyl-[protein] + tRNA(Leu) + H(+). The catalysed reaction is N-terminal L-arginyl-[protein] + L-leucyl-tRNA(Leu) = N-terminal L-leucyl-L-arginyl-[protein] + tRNA(Leu) + H(+). The enzyme catalyses L-phenylalanyl-tRNA(Phe) + an N-terminal L-alpha-aminoacyl-[protein] = an N-terminal L-phenylalanyl-L-alpha-aminoacyl-[protein] + tRNA(Phe). Functionally, functions in the N-end rule pathway of protein degradation where it conjugates Leu, Phe and, less efficiently, Met from aminoacyl-tRNAs to the N-termini of proteins containing an N-terminal arginine or lysine. This Pseudomonas aeruginosa (strain UCBPP-PA14) protein is Leucyl/phenylalanyl-tRNA--protein transferase.